Consider the following 568-residue polypeptide: Natural resistance-associated macrophage protein 2 (568 aa).

The segment covering 1-20 (MVLDPEEKIPDDGASGDHGD) has biased composition (basic and acidic residues). A disordered region spans residues 1-45 (MVLDPEEKIPDDGASGDHGDSASLGAINPAYSNSSLPHSTGDSEE). Residues 1–69 (MVLDPEEKIP…EEYSCFSFRK (69 aa)) are Cytoplasmic-facing. The segment covering 30–40 (AYSNSSLPHST) has biased composition (polar residues). The chain crosses the membrane as a helical span at residues 70–90 (LWAFTGPGFLMSIAYLDPGNI). Residues 91–95 (ESDLQ) lie on the Extracellular side of the membrane. A helical membrane pass occupies residues 96–117 (SGAVAGFKLLWVLLLATIVGLL). Over 118-154 (LQRLAARLGVVTGLHLAEVCHRQYPKVPRIILWLMVE) the chain is Cytoplasmic. Residues 155 to 175 (LAIIGSDMQEVIGSAIAINLL) form a helical membrane-spanning segment. Topologically, residues 176–179 (SAGR) are extracellular. Residues 180-194 (VPLYGGVLITIADTF) form a helical membrane-spanning segment. Residues 195-208 (VFLFLDKYGLRKLE) are Cytoplasmic-facing. Residues 209–229 (AFFGFLITIMALTFGYEYVTV) form a helical membrane-spanning segment. Residues 230 to 255 (KPSQSQVLRGMFVPSCSGCHTPQVEQ) are Extracellular-facing. A helical transmembrane segment spans residues 256–276 (AVGIVGAVIMPHNMYLHSALV). At 277–301 (KSRQVNRANKQEVREANKYFFIESC) the chain is on the cytoplasmic side. The helical transmembrane segment at 302-322 (IALFVSFIINVFVVSVFAEAF) threads the bilayer. Residues 323–360 (FEKTNEQVVEVCRNSSSPHADLFPNDNSTLAVDIYKGG) lie on the Extracellular side of the membrane. Asn336 and Asn349 each carry an N-linked (GlcNAc...) asparagine glycan. A helical membrane pass occupies residues 361-381 (VVLGCYFGPAALYIWAVGILA). Over 382 to 408 (AGQSSTMTGTYSGQFVMEGFLNLKWSR) the chain is Cytoplasmic. The chain crosses the membrane as a helical span at residues 409–429 (FARVILTRSIAIIPTLLVAVF). Residues 430 to 440 (QDVEHLTGMND) are Extracellular-facing. The chain crosses the membrane as a helical span at residues 441–461 (FLNVLQSLQLPFALIPILTFT). At 462 to 482 (SLRPVMSEFSNGIGWRIAGGI) the chain is on the cytoplasmic side. A helical membrane pass occupies residues 483-503 (LVLLVCSINMYFVVVYVQELG). Residues 504–506 (HVA) lie on the Extracellular side of the membrane. Residues 507-527 (LYVVAAVVSVAYLGFVFYLGW) traverse the membrane as a helical segment. Residues 528 to 568 (QCLIALGLSFLDCGRSYHLGLTARPEIYLLNTVDAVSLVSR) are Cytoplasmic-facing. The tract at residues 555 to 559 (YLLNT) is required for early endosome targeting. Leu556, Ser564, and Ser567 each carry phosphoserine.

The protein belongs to the NRAMP family. In terms of assembly, forms a complex with NDFIP1 and NEDD4L, in cortical neurons, in response to iron and cobalt exposure; this interaction leads to SLC11A2 ubiquitination by NEDD4L and proteasome-dependent degradation. Interacts with NDFIP1, NDFIP2 and WWP2; this interaction leads to SLC11A2 ubiquitination by WWP2 and subsequent proteasome-dependent degradation. Interacts with COX2 and TOM6 at the outer mitochondrion membrane. Interacts with ARRDC1; this interaction regulates the incorporation of SLC11A2 into extracellular vesicles through an ubiquitination-dependent mechanism. Interacts with ARRDC4; controls the incorporation of SLC11A2 into extracellular vesicles through an ubiquitination-dependent mechanism. In terms of processing, ubiquitinated by WWP2. N-glycosylated. Ubiquitous. In terms of tissue distribution, expressed in proximal intestine, kidney and brain.

Its subcellular location is the golgi apparatus. It localises to the trans-Golgi network membrane. It is found in the early endosome membrane. The protein resides in the recycling endosome membrane. The protein localises to the late endosome membrane. Its subcellular location is the lysosome membrane. It localises to the apical cell membrane. It is found in the mitochondrion outer membrane. The protein resides in the extracellular vesicle membrane. The enzyme catalyses Fe(2+)(in) + H(+)(in) = Fe(2+)(out) + H(+)(out). The catalysed reaction is Cd(2+)(out) + H(+)(out) = Cd(2+)(in) + H(+)(in). It catalyses the reaction Co(2+)(out) + H(+)(out) = Co(2+)(in) + H(+)(in). It carries out the reaction Mn(2+)(in) + H(+)(in) = Mn(2+)(out) + H(+)(out). The enzyme catalyses Zn(2+)(out) + H(+)(out) = Zn(2+)(in) + H(+)(in). The catalysed reaction is Ni(2+)(out) + H(+)(out) = Ni(2+)(in) + H(+)(in). It catalyses the reaction H(+)(in) = H(+)(out). It carries out the reaction Fe(2+)(in) = Fe(2+)(out). Inhibited by 2-(3-carbamimidoylsulfanylmethyl-benzyl)-isothiourea. In terms of biological role, proton-coupled metal ion symporter operating with a proton to metal ion stoichiometry of 1:1. Selectively transports various divalent metal cations, in decreasing affinity: Cd(2+) &gt; Fe(2+) &gt; Co(2+), Mn(2+) &gt;&gt; Zn(2+), Ni(2+), VO(2+). Essential for maintenance of iron homeostasis by modulating intestinal absorption of dietary Fe(2+) and TF-associated endosomal Fe(2+) transport in erythroid precursors and other cells. Enables Fe(2+) and Mn(2+) ion entry into mitochondria, and is thus expected to promote mitochondrial heme synthesis, iron-sulfur cluster biogenesis and antioxidant defense. Can mediate uncoupled fluxes of either protons or metal ions. The sequence is that of Natural resistance-associated macrophage protein 2 (Slc11a2) from Rattus norvegicus (Rat).